Reading from the N-terminus, the 490-residue chain is Probable cytosol aminopeptidase (490 aa).

Mn(2+)-binding residues include lysine 257 and aspartate 262. Lysine 269 is an active-site residue. Aspartate 281, aspartate 341, and glutamate 343 together coordinate Mn(2+). Arginine 345 is a catalytic residue.

This sequence belongs to the peptidase M17 family. Mn(2+) is required as a cofactor.

Its subcellular location is the cytoplasm. The enzyme catalyses Release of an N-terminal amino acid, Xaa-|-Yaa-, in which Xaa is preferably Leu, but may be other amino acids including Pro although not Arg or Lys, and Yaa may be Pro. Amino acid amides and methyl esters are also readily hydrolyzed, but rates on arylamides are exceedingly low.. It catalyses the reaction Release of an N-terminal amino acid, preferentially leucine, but not glutamic or aspartic acids.. Functionally, presumably involved in the processing and regular turnover of intracellular proteins. Catalyzes the removal of unsubstituted N-terminal amino acids from various peptides. This is Probable cytosol aminopeptidase from Prochlorococcus marinus (strain MIT 9312).